Consider the following 487-residue polypeptide: MMKFDNSYAHLPERFSAAVLPTPVKAPRLIAFNRTLAEELLLDVADLDDDRLAAIFSGNVVPQGAEPLAMAYAGHQFGGFVPQLGDGRAILLGEVIDVNGRRRDIQLKGSGPTPFSRRGDGRAALGPVLREYIVSEAMFALGIPATRALAAVLSGDRVQREVGLPGGVFTRVAASHIRVGTFQFFAAREDDEAIRSLADYVIDRHYPDAKNTENPYLALLRGIAERQCALIARWMMVGFIHGVMNTDNMAVSGETIDFGPCAFLDEYHPNKVFSSIDAQGRYAYNNQPGIAQWNIARLAECLLPLLDPEVEKAAELANAVLADFAAAFPQRWLTGMREKLGLTTEEEGDMDLIQSLLSLMQASEADFTLTFRRLSHAANGDAEPFRGMFIDIAGADAFLTRWRERAGREGISDSERSAAMLSINPAIIPRNHRIEELIEAAVEDGDFEPFHAMLTAIATPFEERPDNFVYMQPPMSHERVFRTFCGT.

ATP contacts are provided by Gly85, Gly87, Arg88, Lys108, Asp120, Gly121, Arg171, and Arg178. Asp247 (proton acceptor) is an active-site residue. Positions 248 and 257 each coordinate Mg(2+). Residue Asp257 participates in ATP binding.

This sequence belongs to the SELO family. It depends on Mg(2+) as a cofactor. Mn(2+) is required as a cofactor.

The enzyme catalyses L-seryl-[protein] + ATP = 3-O-(5'-adenylyl)-L-seryl-[protein] + diphosphate. It catalyses the reaction L-threonyl-[protein] + ATP = 3-O-(5'-adenylyl)-L-threonyl-[protein] + diphosphate. The catalysed reaction is L-tyrosyl-[protein] + ATP = O-(5'-adenylyl)-L-tyrosyl-[protein] + diphosphate. It carries out the reaction L-histidyl-[protein] + UTP = N(tele)-(5'-uridylyl)-L-histidyl-[protein] + diphosphate. The enzyme catalyses L-seryl-[protein] + UTP = O-(5'-uridylyl)-L-seryl-[protein] + diphosphate. It catalyses the reaction L-tyrosyl-[protein] + UTP = O-(5'-uridylyl)-L-tyrosyl-[protein] + diphosphate. Its function is as follows. Nucleotidyltransferase involved in the post-translational modification of proteins. It can catalyze the addition of adenosine monophosphate (AMP) or uridine monophosphate (UMP) to a protein, resulting in modifications known as AMPylation and UMPylation. This Agrobacterium fabrum (strain C58 / ATCC 33970) (Agrobacterium tumefaciens (strain C58)) protein is Protein nucleotidyltransferase YdiU.